The chain runs to 644 residues: Exoribonuclease 2 (644 aa).

Residues Arg189–Lys516 enclose the RNB domain. Positions Asp561 to Val643 constitute an S1 motif domain.

This sequence belongs to the RNR ribonuclease family. RNase II subfamily.

The protein resides in the cytoplasm. The enzyme catalyses Exonucleolytic cleavage in the 3'- to 5'-direction to yield nucleoside 5'-phosphates.. Involved in mRNA degradation. Hydrolyzes single-stranded polyribonucleotides processively in the 3' to 5' direction. The sequence is that of Exoribonuclease 2 from Escherichia coli O157:H7.